Here is a 404-residue protein sequence, read N- to C-terminus: Flavohemoprotein (404 aa).

Residues 1–138 (MLSEQTRSLV…LADTLIGIEN (138 aa)) enclose the Globin domain. H85 contributes to the heme b binding site. Active-site charge relay system residues include Y95 and E137. The tract at residues 149–404 (GGWSGWRPFR…EVFGSHPGDD (256 aa)) is reductase. The FAD-binding FR-type domain occupies 152–263 (SGWRPFRVAK…SAPQGDFFLH (112 aa)). FAD is bound by residues Y190 and 206 to 209 (RQYS). 276–281 (GVGQTP) lines the NADP(+) pocket. Residue 396–399 (VFGS) participates in FAD binding.

It belongs to the globin family. Two-domain flavohemoproteins subfamily. In the C-terminal section; belongs to the flavoprotein pyridine nucleotide cytochrome reductase family. It depends on heme b as a cofactor. FAD is required as a cofactor.

The enzyme catalyses 2 nitric oxide + NADPH + 2 O2 = 2 nitrate + NADP(+) + H(+). It catalyses the reaction 2 nitric oxide + NADH + 2 O2 = 2 nitrate + NAD(+) + H(+). Functionally, is involved in NO detoxification in an aerobic process, termed nitric oxide dioxygenase (NOD) reaction that utilizes O(2) and NAD(P)H to convert NO to nitrate, which protects the bacterium from various noxious nitrogen compounds. Therefore, plays a central role in the inducible response to nitrosative stress. The sequence is that of Flavohemoprotein from Chromobacterium violaceum (strain ATCC 12472 / DSM 30191 / JCM 1249 / CCUG 213 / NBRC 12614 / NCIMB 9131 / NCTC 9757 / MK).